The sequence spans 698 residues: Polyribonucleotide nucleotidyltransferase (698 aa).

Mg(2+)-binding residues include Asp-485 and Asp-491. The 60-residue stretch at 552-611 folds into the KH domain; that stretch reads PRITTIKINPEKIRDVIGKGGAVIRALTEETGTTIELDDNGTVKIASSNGEATKEAIRRI. Residues 621-689 form the S1 motif domain; sequence GRIYNGKVIR…RQGRVRLSIK (69 aa).

It belongs to the polyribonucleotide nucleotidyltransferase family. As to quaternary structure, component of the RNA degradosome, which is a multiprotein complex involved in RNA processing and mRNA degradation. The cofactor is Mg(2+).

Its subcellular location is the cytoplasm. The catalysed reaction is RNA(n+1) + phosphate = RNA(n) + a ribonucleoside 5'-diphosphate. In terms of biological role, involved in mRNA degradation. Catalyzes the phosphorolysis of single-stranded polyribonucleotides processively in the 3'- to 5'-direction. This Shewanella frigidimarina (strain NCIMB 400) protein is Polyribonucleotide nucleotidyltransferase.